We begin with the raw amino-acid sequence, 943 residues long: Glycine dehydrogenase (decarboxylating) (943 aa).

Lysine 695 carries the post-translational modification N6-(pyridoxal phosphate)lysine.

The protein belongs to the GcvP family. As to quaternary structure, the glycine cleavage system is composed of four proteins: P, T, L and H. It depends on pyridoxal 5'-phosphate as a cofactor.

The enzyme catalyses N(6)-[(R)-lipoyl]-L-lysyl-[glycine-cleavage complex H protein] + glycine + H(+) = N(6)-[(R)-S(8)-aminomethyldihydrolipoyl]-L-lysyl-[glycine-cleavage complex H protein] + CO2. Its function is as follows. The glycine cleavage system catalyzes the degradation of glycine. The P protein binds the alpha-amino group of glycine through its pyridoxal phosphate cofactor; CO(2) is released and the remaining methylamine moiety is then transferred to the lipoamide cofactor of the H protein. This Jannaschia sp. (strain CCS1) protein is Glycine dehydrogenase (decarboxylating).